The primary structure comprises 105 residues: Cell division protein FtsB (105 aa).

The Cytoplasmic portion of the chain corresponds to 1-3 (MKP). The chain crosses the membrane as a helical span at residues 4–21 (FVLVLFALLALLQYRLWF). The Periplasmic segment spans residues 22–105 (GENSLTEYFT…RSSEQSQDNQ (84 aa)). A coiled-coil region spans residues 38–75 (HQQSGNAELLERNEVLKEEIQDLKSGTEALEERARNEL).

This sequence belongs to the FtsB family. Part of a complex composed of FtsB, FtsL and FtsQ.

The protein localises to the cell inner membrane. Its function is as follows. Essential cell division protein. May link together the upstream cell division proteins, which are predominantly cytoplasmic, with the downstream cell division proteins, which are predominantly periplasmic. The sequence is that of Cell division protein FtsB from Shewanella amazonensis (strain ATCC BAA-1098 / SB2B).